The following is a 505-amino-acid chain: Putative F-box protein At1g58310 (505 aa).

The 49-residue stretch at 7 to 55 folds into the F-box domain; the sequence is RDIISGLPDSLLCHILSFLNTKEAASTSVLAKKWRYLFASVPNLDFDDS.

This is Putative F-box protein At1g58310 from Arabidopsis thaliana (Mouse-ear cress).